Here is a 158-residue protein sequence, read N- to C-terminus: S-ribosylhomocysteine lyase (158 aa).

The Fe cation site is built by histidine 54, histidine 58, and cysteine 124.

This sequence belongs to the LuxS family. In terms of assembly, homodimer. Fe cation is required as a cofactor.

The enzyme catalyses S-(5-deoxy-D-ribos-5-yl)-L-homocysteine = (S)-4,5-dihydroxypentane-2,3-dione + L-homocysteine. Involved in the synthesis of autoinducer 2 (AI-2) which is secreted by bacteria and is used to communicate both the cell density and the metabolic potential of the environment. The regulation of gene expression in response to changes in cell density is called quorum sensing. Catalyzes the transformation of S-ribosylhomocysteine (RHC) to homocysteine (HC) and 4,5-dihydroxy-2,3-pentadione (DPD). The protein is S-ribosylhomocysteine lyase of Limosilactobacillus reuteri (Lactobacillus reuteri).